A 263-amino-acid chain; its full sequence is Putative hydro-lyase Psyc_1103 (263 aa).

Belongs to the D-glutamate cyclase family.

In Psychrobacter arcticus (strain DSM 17307 / VKM B-2377 / 273-4), this protein is Putative hydro-lyase Psyc_1103.